The chain runs to 147 residues: Cell division protein SepF 1 (147 aa).

This sequence belongs to the SepF family. In terms of assembly, homodimer. Interacts with FtsZ.

The protein localises to the cytoplasm. Cell division protein that is part of the divisome complex and is recruited early to the Z-ring. Probably stimulates Z-ring formation, perhaps through the cross-linking of FtsZ protofilaments. Its function overlaps with FtsA. This chain is Cell division protein SepF 1, found in Desulforamulus reducens (strain ATCC BAA-1160 / DSM 100696 / MI-1) (Desulfotomaculum reducens).